A 495-amino-acid polypeptide reads, in one-letter code: Probable aminotransferase ACS12 (495 aa).

Lysine 334 carries the N6-(pyridoxal phosphate)lysine modification.

This sequence belongs to the class-I pyridoxal-phosphate-dependent aminotransferase family. In terms of assembly, homodimer. Pyridoxal 5'-phosphate serves as cofactor. Expressed in roots. Expressed at low level in leaves, stems, flowers and siliques.

Functionally, probable aminotransferase. Does not have 1-aminocyclopropane-1-carboxylate synthase (ACS) activity, suggesting that it is not involved in ethylene biosynthesis. This chain is Probable aminotransferase ACS12 (ACS12), found in Arabidopsis thaliana (Mouse-ear cress).